Reading from the N-terminus, the 503-residue chain is Probable cytosol aminopeptidase (503 aa).

Mn(2+) contacts are provided by Lys270 and Asp275. Lys282 is a catalytic residue. Positions 293, 352, and 354 each coordinate Mn(2+). Arg356 is an active-site residue.

This sequence belongs to the peptidase M17 family. Mn(2+) is required as a cofactor.

The protein localises to the cytoplasm. The catalysed reaction is Release of an N-terminal amino acid, Xaa-|-Yaa-, in which Xaa is preferably Leu, but may be other amino acids including Pro although not Arg or Lys, and Yaa may be Pro. Amino acid amides and methyl esters are also readily hydrolyzed, but rates on arylamides are exceedingly low.. The enzyme catalyses Release of an N-terminal amino acid, preferentially leucine, but not glutamic or aspartic acids.. Presumably involved in the processing and regular turnover of intracellular proteins. Catalyzes the removal of unsubstituted N-terminal amino acids from various peptides. This chain is Probable cytosol aminopeptidase, found in Salmonella agona (strain SL483).